The following is a 375-amino-acid chain: MKYAAFLPTIGALVSQAIAIGVQGTAEGFASSVTGGGSATPVYPSTTDELVSYLGDSEARVIVLTKTFDFTGTEGTTTATGCAPWGTASGCQVAINKDNWCTNYQSSAPSVSVTYDNAGSLGITVNSNKSLIGEGTSGVIKGKGLRIVSGAKNIIIQNIAITDINPKYVWGGDAITINQADLVWVDHVTTARIGRQHYVLGTEASNRITLSNNYIDGESDYSATCDNHHYWNIYLDGSSDKVTLKGNYLYKTSGRAPKVQGNTYLHAVNNYWNDNSNHAFEIGDGAYVLAEGNLFSDVTAAVESSSFTGELFGSASASSTCQSYIGRDCVANSFSSSGTLSGSNVDVLSKFKGETVASASAAGTSPASSAGQGHL.

An N-terminal signal peptide occupies residues 1 to 19; that stretch reads MKYAAFLPTIGALVSQAIA. Disulfide bonds link cysteine 82–cysteine 101 and cysteine 91–cysteine 225. Asparagine 128 carries an N-linked (GlcNAc...) asparagine glycan. Arginine 255 is a catalytic residue. Residues cysteine 321 and cysteine 329 are joined by a disulfide bond.

It belongs to the polysaccharide lyase 1 family.

Its subcellular location is the secreted. The enzyme catalyses Eliminative cleavage of (1-&gt;4)-alpha-D-galacturonan methyl ester to give oligosaccharides with 4-deoxy-6-O-methyl-alpha-D-galact-4-enuronosyl groups at their non-reducing ends.. Functionally, pectinolytic enzymes consist of four classes of enzymes: pectin lyase, polygalacturonase, pectin methylesterase and rhamnogalacturonase. Among pectinolytic enzymes, pectin lyase is the most important in depolymerization of pectin, since it cleaves internal glycosidic bonds of highly methylated pectins. This is Probable pectin lyase B (pelB) from Aspergillus fumigatus (strain CBS 144.89 / FGSC A1163 / CEA10) (Neosartorya fumigata).